Reading from the N-terminus, the 427-residue chain is Glutamate-1-semialdehyde 2,1-aminomutase 2 (427 aa).

K267 carries the N6-(pyridoxal phosphate)lysine modification.

The protein belongs to the class-III pyridoxal-phosphate-dependent aminotransferase family. HemL subfamily. In terms of assembly, homodimer. Requires pyridoxal 5'-phosphate as cofactor.

The protein localises to the cytoplasm. It catalyses the reaction (S)-4-amino-5-oxopentanoate = 5-aminolevulinate. Its pathway is porphyrin-containing compound metabolism; protoporphyrin-IX biosynthesis; 5-aminolevulinate from L-glutamyl-tRNA(Glu): step 2/2. This chain is Glutamate-1-semialdehyde 2,1-aminomutase 2, found in Staphylococcus haemolyticus (strain JCSC1435).